The primary structure comprises 569 residues: MPATISRAAYADMYGPTTGDKVRLADTDLIIEVERDLTTYGEEVKFGGGKVIRDGMGQSQATRAEGAVDTVITNALIVDHTGIYKADVGLRDGVIAAIGKAGNPDTQTGVDIIIGPGTEAIAGEGRILTAGGFDSHIHFICPQQIEDALHSGITTMIGGGTGPAHGSLATTCTPGAFHIGRMLQSLDAFPMNFGLAGKGNASRPGALVEMIEAGACAMKLHEDWGTTPGAIDCCLSVADDMDVQVMIHTDTLNESGFVENTIAAMKGRTIHAFHTEGAGGGHAPDIMKVVGFEHVLPSSTNPTMPYTVNTLEEHLDMLMVCHHLDKAIPEDVAFAESRIRKETIAAEDILHDMGAFSIIASDSQAMGRVGEVIIRTWQTADKMKKQRGRLAEETGDNDNFRVRRYIAKYTINPAIAHGISAHIGSIEVGKRADLCLWNPAFFGVKPEMILMGGTIVCAQMGDPNASIPTPQPVYTRPMFGAYGRSVENSAVLFVSQAGQAAGIGASLGLAKQTLAVKTCRDIGKSSMVHNSATPEVEVHPETYEVRADGELLTCEPATELPLAQRYFMF.

Positions 136, 138, and 219 each coordinate Ni(2+). N6-carboxylysine is present on lysine 219. Histidine 221 lines the substrate pocket. The Ni(2+) site is built by histidine 248 and histidine 274. Histidine 322 acts as the Proton donor in catalysis. A Ni(2+)-binding site is contributed by aspartate 362.

Belongs to the metallo-dependent hydrolases superfamily. Urease alpha subunit family. Heterotrimer of UreA (gamma), UreB (beta) and UreC (alpha) subunits. Three heterotrimers associate to form the active enzyme. Requires Ni cation as cofactor. In terms of processing, carboxylation allows a single lysine to coordinate two nickel ions.

The protein localises to the cytoplasm. The catalysed reaction is urea + 2 H2O + H(+) = hydrogencarbonate + 2 NH4(+). The protein operates within nitrogen metabolism; urea degradation; CO(2) and NH(3) from urea (urease route): step 1/1. This is Urease subunit alpha from Dinoroseobacter shibae (strain DSM 16493 / NCIMB 14021 / DFL 12).